A 346-amino-acid polypeptide reads, in one-letter code: MEISTDALIAISIIWGFVFIYAVMATMDFGAGFWSMIYLNKEHMKATDIANRFLSPTWEVTNVFIVAIVVALFSFFPGATFVLGTVLLIPGSMILLLLAIRSGFLVFSNTAKERKTLRYISGISGFIIPAILILVLPVTHGGFIEKTDGIYNLNMSKIFSSPNAYSFIGFAILSTLFLSSLLLADFSNVAEEQDAYRAYRKSALITGPISLLFAVCIMVTMRNEANWLYSGMMNDFSWIIASFITFVIAGIALFLPNKSFGQNIGKPRLALVAIGIQYFLASYAYGRAHLPYMIYPDVTVMSGFTEPATFRALFATYIVAFIILFPGFFFFWKMFMRDKRYIRQEE.

9 consecutive transmembrane segments (helical) span residues 7–27 (ALIA…MATM), 63–83 (VFIV…TFVL), 87–107 (LLIP…FLVF), 119–139 (YISG…LPVT), 164–184 (AYSF…LLLA), 201–221 (KSAL…MVTM), 236–256 (FSWI…LFLP), 269–289 (LALV…GRAH), and 312–332 (ALFA…FFFW).

This sequence belongs to the cytochrome ubiquinol oxidase subunit 2 family.

The protein resides in the cell membrane. In terms of biological role, may have a role in sporulation. Can compensate for the loss of cytochrome aa3. This is Putative cytochrome bd menaquinol oxidase subunit II (ythB) from Bacillus subtilis (strain 168).